The sequence spans 175 residues: Probable S-adenosyl-L-methionine-binding protein VirR (175 aa).

In terms of domain architecture, TsaA-like spans 35–165 (LFFVGKIRTP…DRSLSKPLAP (131 aa)). S-adenosyl-L-methionine is bound by residues 52 to 54 (PRQ), 90 to 91 (HE), Arg-114, Thr-124, and 145 to 148 (LDGT).

It belongs to the tRNA methyltransferase O family.

This is Probable S-adenosyl-L-methionine-binding protein VirR (virR) from Rhizobium radiobacter (Agrobacterium tumefaciens).